The chain runs to 85 residues: Large ribosomal subunit protein bL27 (85 aa).

The tract at residues 1 to 22 is disordered; that stretch reads MAKTKAGGSTRNGRDSKGRRLG.

The protein belongs to the bacterial ribosomal protein bL27 family.

The polypeptide is Large ribosomal subunit protein bL27 (Mycoplasmopsis pulmonis (strain UAB CTIP) (Mycoplasma pulmonis)).